The primary structure comprises 122 residues: NADH-quinone oxidoreductase subunit A (122 aa).

The next 3 helical transmembrane spans lie at Ile-12 to Ile-32, Leu-66 to Ile-86, and Ile-91 to Ile-111.

Belongs to the complex I subunit 3 family. In terms of assembly, NDH-1 is composed of 14 different subunits. Subunits NuoA, H, J, K, L, M, N constitute the membrane sector of the complex.

It is found in the cell inner membrane. The enzyme catalyses a quinone + NADH + 5 H(+)(in) = a quinol + NAD(+) + 4 H(+)(out). NDH-1 shuttles electrons from NADH, via FMN and iron-sulfur (Fe-S) centers, to quinones in the respiratory chain. The immediate electron acceptor for the enzyme in this species is believed to be ubiquinone. Couples the redox reaction to proton translocation (for every two electrons transferred, four hydrogen ions are translocated across the cytoplasmic membrane), and thus conserves the redox energy in a proton gradient. The sequence is that of NADH-quinone oxidoreductase subunit A from Pelagibacter ubique (strain HTCC1062).